The chain runs to 243 residues: Putative glycerophosphodiester phosphodiesterase YhdW (243 aa).

One can recognise a GP-PDE domain in the interval 1-238 (MYIIAHRGAS…DYPDFIIKDG (238 aa)). Residue H6 is the Proton acceptor of the active site. Ca(2+)-binding residues include E33 and D35. Residue H48 is the Proton donor of the active site. E107 contacts Ca(2+).

This sequence belongs to the glycerophosphoryl diester phosphodiesterase family. It depends on Ca(2+) as a cofactor.

It carries out the reaction a sn-glycero-3-phosphodiester + H2O = an alcohol + sn-glycerol 3-phosphate + H(+). Functionally, glycerophosphodiester phosphodiesterase hydrolyzes glycerophosphodiesters into glycerol-3-phosphate (G3P) and the corresponding alcohol. This is Putative glycerophosphodiester phosphodiesterase YhdW (yhdW) from Bacillus subtilis (strain 168).